Here is a 715-residue protein sequence, read N- to C-terminus: Palmitoyltransferase ZDHHC5 (715 aa).

The Cytoplasmic portion of the chain corresponds to 1 to 13 (MPAESGKRFKPSK). A helical membrane pass occupies residues 14–34 (YVPVSAAAIFLVGATTLFFAF). Topologically, residues 35–38 (TCPG) are extracellular. Residues 39–59 (LSLCVSPAVPIYNAIVFLFVL) form a helical membrane-spanning segment. Residues 60–148 (ANFSMATFMD…NCIGRRNYRY (89 aa)) lie on the Cytoplasmic side of the membrane. At Tyr-91 the chain carries Phosphotyrosine. In terms of domain architecture, DHHC spans 104–154 (KWCATCRFYRPPRCSHCSVCDNCVEEFDHHCPWVNNCIGRRNYRYFFLFLL). Cys-134 (S-palmitoyl cysteine intermediate) is an active-site residue. A helical transmembrane segment spans residues 149–169 (FFLFLLSLTAHIMGVFGFGLL). Over 170 to 191 (YVLYHMEELSGVRTAVTMAVMC) the chain is Extracellular. Residues 192 to 212 (VAGLFFIPVAGLTGFHVVLVA) traverse the membrane as a helical segment. At 213–715 (RGRTTNEQVT…VGGTTYEISV (503 aa)) the chain is on the cytoplasmic side. Phosphoserine occurs at positions 247, 296, and 299. A disordered region spans residues 289–648 (GELRRSKSKG…SQKAPAGVSE (360 aa)). Residue Thr-303 is modified to Phosphothreonine. Ser-345 carries the phosphoserine modification. Residues Thr-348 and Thr-350 each carry the phosphothreonine modification. Low complexity predominate over residues 359–373 (SSSSTSAAMPHSSSA). Residues Ser-380, Ser-398, Ser-406, and Ser-409 each carry the phosphoserine modification. A Phosphothreonine modification is found at Thr-411. Phosphoserine is present on residues Ser-415, Ser-425, Ser-429, and Ser-432. A compositionally biased stretch (low complexity) spans 422–432 (SSGSRSSSLKS). Thr-436 is subject to Phosphothreonine. The segment covering 442-478 (QLQSIRSEGTTSTSYKSLANQTRNGSLSYDSLLTPSD) has biased composition (polar residues). A phosphoserine mark is found at Ser-529 and Ser-554. Position 617 is an omega-N-methylarginine (Arg-617). Ser-621 is subject to Phosphoserine. Phosphothreonine is present on Thr-659. The interval 666 to 715 (LKTAYSKSNGQPKSIGSASPGPGQQPLSSPTRGGVKKVSGVGGTTYEISV) is disordered. Polar residues predominate over residues 668 to 679 (TAYSKSNGQPKS). A compositionally biased stretch (low complexity) spans 681–695 (GSASPGPGQQPLSSP). Residues Ser-684 and Ser-694 each carry the phosphoserine modification. Residue Arg-697 is modified to Omega-N-methylarginine.

This sequence belongs to the DHHC palmitoyltransferase family. ERF2/ZDHHC9 subfamily. Phosphorylation regulates association with endocytic proteins and its subcellular localization. Phosphorylation by LYN during fatty acid uptake leads to inactivation of the activity. Post-translationally, autopalmitoylated. Palmitoylation of the C-terminal tail regulates stimulation-dependent plasma membrane motility.

It is found in the cell membrane. It carries out the reaction L-cysteinyl-[protein] + hexadecanoyl-CoA = S-hexadecanoyl-L-cysteinyl-[protein] + CoA. Its function is as follows. Palmitoyltransferase that catalyzes the addition of palmitate onto various protein substrates such as CTNND2, CD36, GSDMD, NLRP3, NOD1, NOD2, STAT3 and S1PR1 thus plays a role in various biological processes including cell adhesion, inflammation, fatty acid uptake, bacterial sensing or cardiac functions. Plays an important role in the regulation of synapse efficacy by mediating palmitoylation of delta-catenin/CTNND2, thereby increasing synaptic delivery and surface stabilization of alpha-amino-3-hydroxy-5-methyl-4-isoxazole propionic acid receptors (AMPARs). Under basal conditions, remains at the synaptic membrane through FYN-mediated phosphorylation that prevents association with endocytic proteins. Neuronal activity enhances the internalization and trafficking of DHHC5 from spines to dendritic shafts where it palmitoylates delta-catenin/CTNND2. Regulates cell adhesion at the plasma membrane by palmitoylating GOLGA7B and DSG2. Plays a role in innate immune response by mediating the palmitoylation of NOD1 and NOD2 and their proper recruitment to the bacterial entry site and phagosomes. Also participates in fatty acid uptake by palmitoylating CD36 and thereby targeting it to the plasma membrane. Upon binding of fatty acids to CD36, gets phosphorylated by LYN leading to inactivation and subsequent CD36 caveolar endocytosis. Controls oligodendrocyte development by catalyzing STAT3 palmitoylation. Acts as a regulator of inflammatory response by mediating palmitoylation of NLRP3 and GSDMD. Palmitoylates NLRP3 to promote inflammasome assembly and activation. Activates pyroptosis by catalyzing palmitoylation of gasdermin-D (GSDMD), thereby promoting membrane translocation and pore formation of GSDMD. The chain is Palmitoyltransferase ZDHHC5 (ZDHHC5) from Canis lupus familiaris (Dog).